The following is a 374-amino-acid chain: Translocating chain-associated membrane protein 1 (374 aa).

Residues M1–C29 are Cytoplasmic-facing. The chain crosses the membrane as a helical span at residues V30–F50. The Lumenal segment spans residues V51 to A81. The N-linked (GlcNAc...) asparagine glycan is linked to N56. A helical membrane pass occupies residues T82–L102. Topologically, residues D103–E121 are cytoplasmic. The 210-residue stretch at S117–H326 folds into the TLC domain. A helical membrane pass occupies residues S122–S142. At E143–N159 the chain is on the lumenal side. A helical membrane pass occupies residues L160–F180. The Cytoplasmic portion of the chain corresponds to P181 to D192. The chain crosses the membrane as a helical span at residues I193–L213. A topological domain (lumenal) is located at residue N214. A helical transmembrane segment spans residues L215 to I235. The Cytoplasmic segment spans residues S236–S251. A helical membrane pass occupies residues L252 to V272. The Lumenal portion of the chain corresponds to G273–R297. Residues I298–F318 traverse the membrane as a helical segment. Residues Q319 to S374 are Cytoplasmic-facing. Residues A331–S374 are disordered. Positions V334–R347 are enriched in basic residues. Polar residues predominate over residues N352 to A363. Position 365 is a phosphoserine (S365).

Belongs to the TRAM family. Interacts with SEC61B. May interact with Derlin-1/DERL1. N-glycosylated.

Its subcellular location is the endoplasmic reticulum membrane. In terms of biological role, involved in the translocation of nascent protein chains into or through the endoplasmic reticulum (ER) membrane by facilitating the proper chain positioning at the SEC61 channel. Regulates the exposure of nascent secretory protein chain to the cytosol during translocation into the ER. May affect the phospholipid bilayer in the vicinity of the lateral gate of the SEC61 channel, thereby facilitating ER protein transport. Intimately associates with transmembrane (TM) domain of nascent membrane proteins during the entire integration process into the ER membrane. Associates with the second TM domain of G-protein-coupled receptor opsin/OPSD nascent chain in the ER membrane, which may facilitate its integration into the membrane. Under conditions of ER stress, participates in the disposal of misfolded ER membrane proteins during the unfolded protein response (UPR), an integrated stress response (ISR) pathway, by selectively retrotranslocating misfolded ER-membrane proteins from the ER into the cytosol where they are ubiquitinated and degraded by the proteasome. The sequence is that of Translocating chain-associated membrane protein 1 (TRAM1) from Bos taurus (Bovine).